The primary structure comprises 457 residues: Ribosomal protein uS12 methylthiotransferase RimO (457 aa).

An MTTase N-terminal domain is found at 9–128 (KKVHFISLGC…ILKNSDEGEK (120 aa)). Residues C18, C54, C88, C163, C167, and C170 each contribute to the [4Fe-4S] cluster site. In terms of domain architecture, Radical SAM core spans 149–384 (SQPGHRAYLK…MEVQQNISRE (236 aa)). In terms of domain architecture, TRAM spans 387 to 455 (SDFVGKTLQV…EYDLIGEIVV (69 aa)).

It belongs to the methylthiotransferase family. RimO subfamily. [4Fe-4S] cluster serves as cofactor.

It is found in the cytoplasm. It catalyses the reaction L-aspartate(89)-[ribosomal protein uS12]-hydrogen + (sulfur carrier)-SH + AH2 + 2 S-adenosyl-L-methionine = 3-methylsulfanyl-L-aspartate(89)-[ribosomal protein uS12]-hydrogen + (sulfur carrier)-H + 5'-deoxyadenosine + L-methionine + A + S-adenosyl-L-homocysteine + 2 H(+). In terms of biological role, catalyzes the methylthiolation of an aspartic acid residue of ribosomal protein uS12. The sequence is that of Ribosomal protein uS12 methylthiotransferase RimO from Bdellovibrio bacteriovorus (strain ATCC 15356 / DSM 50701 / NCIMB 9529 / HD100).